Consider the following 511-residue polypeptide: Small ribosomal subunit protein uS4m (511 aa).

The S4 RNA-binding domain occupies 202–272 (KRLDVVLYRS…IKNNLFSNIN (71 aa)).

Belongs to the universal ribosomal protein uS4 family.

It localises to the mitochondrion. The polypeptide is Small ribosomal subunit protein uS4m (RPS4) (Prototheca wickerhamii).